The following is a 359-amino-acid chain: Protein Wnt-5b (359 aa).

The signal sequence occupies residues Met-1–Ala-17. The cysteines at positions 83 and 94 are disulfide-linked. Residues Asn-93 and Asn-99 are each glycosylated (N-linked (GlcNAc...) asparagine). 10 disulfide bridges follow: Cys-133/Cys-141, Cys-143/Cys-161, Cys-217/Cys-231, Cys-219/Cys-226, Cys-288/Cys-319, Cys-304/Cys-314, Cys-318/Cys-358, Cys-334/Cys-349, Cys-336/Cys-346, and Cys-341/Cys-342. Ser-223 carries the O-palmitoleoyl serine; by PORCN lipid modification. Asn-291 and Asn-305 each carry an N-linked (GlcNAc...) asparagine glycan.

It belongs to the Wnt family. Interacts with PORCN. In terms of processing, palmitoleoylation is required for efficient binding to frizzled receptors. Depalmitoleoylation leads to Wnt signaling pathway inhibition.

The protein resides in the secreted. It is found in the extracellular space. The protein localises to the extracellular matrix. Functionally, ligand for members of the frizzled family of seven transmembrane receptors. Probable developmental protein. May be a signaling molecule which affects the development of discrete regions of tissues. Is likely to signal over only few cell diameters. The protein is Protein Wnt-5b (WNT5B) of Pongo abelii (Sumatran orangutan).